We begin with the raw amino-acid sequence, 459 residues long: Exodeoxyribonuclease 7 large subunit (459 aa).

This sequence belongs to the XseA family. As to quaternary structure, heterooligomer composed of large and small subunits.

Its subcellular location is the cytoplasm. It catalyses the reaction Exonucleolytic cleavage in either 5'- to 3'- or 3'- to 5'-direction to yield nucleoside 5'-phosphates.. Functionally, bidirectionally degrades single-stranded DNA into large acid-insoluble oligonucleotides, which are then degraded further into small acid-soluble oligonucleotides. The chain is Exodeoxyribonuclease 7 large subunit from Pseudomonas savastanoi pv. phaseolicola (strain 1448A / Race 6) (Pseudomonas syringae pv. phaseolicola (strain 1448A / Race 6)).